A 276-amino-acid polypeptide reads, in one-letter code: Large ribosomal subunit protein uL2 (276 aa).

Basic and acidic residues predominate over residues 28 to 38 (RPEKSLTEKLS). Disordered stretches follow at residues 28–57 (RPEK…QGGG) and 219–276 (TVRG…RRKK).

Belongs to the universal ribosomal protein uL2 family. As to quaternary structure, part of the 50S ribosomal subunit. Forms a bridge to the 30S subunit in the 70S ribosome.

Its function is as follows. One of the primary rRNA binding proteins. Required for association of the 30S and 50S subunits to form the 70S ribosome, for tRNA binding and peptide bond formation. It has been suggested to have peptidyltransferase activity; this is somewhat controversial. Makes several contacts with the 16S rRNA in the 70S ribosome. This chain is Large ribosomal subunit protein uL2, found in Exiguobacterium sp. (strain ATCC BAA-1283 / AT1b).